A 286-amino-acid polypeptide reads, in one-letter code: E3 SUMO-protein ligase K-bZIP (286 aa).

Disordered stretches follow at residues 1 to 22 and 106 to 130; these read MPRMKDIPTKSSPGTDNSEKDE and WTLSHTPPRGPHISQQLPTRRSKRR.

In terms of assembly, interacts with host HDAC1 and HDAC2, these interactions suppress HDAC activities. Interacts with protein ORF57. Interacts with protein vPK. In terms of processing, sumoylated.

It participates in protein modification; protein sumoylation. SUMO E3 ligase that plays a role in viral gene regulation and is essential for viral reactivation. Disrupts host G1 cell cycle control thus allowing viral transcription and translation to proceed at the early stages of infection. Catalyzes its own SUMO modification as well as that of its interacting partners such as host TP53 and RB1. Regulates viral gene expression and reactivation and may mediate the SUMOylation of viral promoters in the low methylated 'Lys-9' histone H3 (H3K9me) region which results in a diminution of viral gene expression after reactivation. SUMOylates also host histone lysine demethylase 4A/KDM4A, an essential step for complete enrichment of SUMO-2/3 on the viral genome during viral transactivation and reactivation. The chain is E3 SUMO-protein ligase K-bZIP (K8) from Human herpesvirus 8 type P (isolate GK18) (HHV-8).